Here is a 380-residue protein sequence, read N- to C-terminus: Queuine tRNA-ribosyltransferase (380 aa).

The active-site Proton acceptor is Asp96. Substrate is bound by residues 96 to 100 (DSGGF), Asp150, Gln193, and Gly220. The RNA binding stretch occupies residues 251-257 (GVGAPDS). Asp270 acts as the Nucleophile in catalysis. The tract at residues 275 to 279 (TRIAR) is RNA binding; important for wobble base 34 recognition. Residues Cys308, Cys310, Cys313, and His339 each contribute to the Zn(2+) site.

The protein belongs to the queuine tRNA-ribosyltransferase family. As to quaternary structure, homodimer. Within each dimer, one monomer is responsible for RNA recognition and catalysis, while the other monomer binds to the replacement base PreQ1. The cofactor is Zn(2+).

It carries out the reaction 7-aminomethyl-7-carbaguanine + guanosine(34) in tRNA = 7-aminomethyl-7-carbaguanosine(34) in tRNA + guanine. The protein operates within tRNA modification; tRNA-queuosine biosynthesis. In terms of biological role, catalyzes the base-exchange of a guanine (G) residue with the queuine precursor 7-aminomethyl-7-deazaguanine (PreQ1) at position 34 (anticodon wobble position) in tRNAs with GU(N) anticodons (tRNA-Asp, -Asn, -His and -Tyr). Catalysis occurs through a double-displacement mechanism. The nucleophile active site attacks the C1' of nucleotide 34 to detach the guanine base from the RNA, forming a covalent enzyme-RNA intermediate. The proton acceptor active site deprotonates the incoming PreQ1, allowing a nucleophilic attack on the C1' of the ribose to form the product. After dissociation, two additional enzymatic reactions on the tRNA convert PreQ1 to queuine (Q), resulting in the hypermodified nucleoside queuosine (7-(((4,5-cis-dihydroxy-2-cyclopenten-1-yl)amino)methyl)-7-deazaguanosine). The polypeptide is Queuine tRNA-ribosyltransferase (Streptococcus pyogenes serotype M3 (strain ATCC BAA-595 / MGAS315)).